Consider the following 264-residue polypeptide: Siroheme biosynthesis protein met8 (264 aa).

NAD(+) contacts are provided by residues 32–33 and 53–56; these read VV and PKAG. The Proton acceptor role is filled by Asp117.

It belongs to the precorrin-2 dehydrogenase / sirohydrochlorin ferrochelatase family. MET8 subfamily.

It is found in the cytoplasm. The protein localises to the nucleus. It carries out the reaction precorrin-2 + NAD(+) = sirohydrochlorin + NADH + 2 H(+). The enzyme catalyses siroheme + 2 H(+) = sirohydrochlorin + Fe(2+). It participates in porphyrin-containing compound metabolism; siroheme biosynthesis; siroheme from sirohydrochlorin: step 1/1. The protein operates within porphyrin-containing compound metabolism; siroheme biosynthesis; sirohydrochlorin from precorrin-2: step 1/1. Functionally, catalyzes the conversion of precorrin-2 into siroheme. This reaction consist of the NAD-dependent oxidation of precorrin-2 into sirohydrochlorin and its subsequent ferrochelation into siroheme. This is Siroheme biosynthesis protein met8 (met8) from Schizosaccharomyces pombe (strain 972 / ATCC 24843) (Fission yeast).